The primary structure comprises 252 residues: 5-oxoprolinase subunit A 1 (252 aa).

This sequence belongs to the LamB/PxpA family. As to quaternary structure, forms a complex composed of PxpA, PxpB and PxpC.

The catalysed reaction is 5-oxo-L-proline + ATP + 2 H2O = L-glutamate + ADP + phosphate + H(+). Its function is as follows. Catalyzes the cleavage of 5-oxoproline to form L-glutamate coupled to the hydrolysis of ATP to ADP and inorganic phosphate. This is 5-oxoprolinase subunit A 1 from Bordetella bronchiseptica (strain ATCC BAA-588 / NCTC 13252 / RB50) (Alcaligenes bronchisepticus).